A 265-amino-acid polypeptide reads, in one-letter code: Mlc titration factor A (265 aa).

Zn(2+) contacts are provided by His-111, His-148, His-152, and Glu-211.

It belongs to the MtfA family. As to quaternary structure, interacts with Mlc. Requires Zn(2+) as cofactor.

The protein localises to the cytoplasm. In terms of biological role, involved in the modulation of the activity of the glucose-phosphotransferase system (glucose-PTS). Interacts with the transcriptional repressor Mlc, preventing its interaction with DNA and leading to the modulation of expression of genes regulated by Mlc, including ptsG, which encodes the PTS system glucose-specific EIICB component. Shows zinc-dependent metallopeptidase activity. This chain is Mlc titration factor A, found in Salmonella typhi.